A 739-amino-acid polypeptide reads, in one-letter code: Phosphoribosylformylglycinamidine synthase subunit PurL (739 aa).

His-54 is a catalytic residue. The ATP site is built by Tyr-57 and Lys-96. Glu-98 provides a ligand contact to Mg(2+). Substrate contacts are provided by residues Ser-99 to His-102 and Arg-121. Catalysis depends on His-100, which acts as the Proton acceptor. Asp-122 contacts Mg(2+). Gln-245 serves as a coordination point for substrate. A Mg(2+)-binding site is contributed by Asp-275. Substrate is bound at residue Glu-319 to Gln-321. Residues Asp-504 and Gly-541 each coordinate ATP. Asn-542 provides a ligand contact to Mg(2+). Ser-544 contacts substrate.

This sequence belongs to the FGAMS family. In terms of assembly, monomer. Part of the FGAM synthase complex composed of 1 PurL, 1 PurQ and 2 PurS subunits.

The protein resides in the cytoplasm. The enzyme catalyses N(2)-formyl-N(1)-(5-phospho-beta-D-ribosyl)glycinamide + L-glutamine + ATP + H2O = 2-formamido-N(1)-(5-O-phospho-beta-D-ribosyl)acetamidine + L-glutamate + ADP + phosphate + H(+). The protein operates within purine metabolism; IMP biosynthesis via de novo pathway; 5-amino-1-(5-phospho-D-ribosyl)imidazole from N(2)-formyl-N(1)-(5-phospho-D-ribosyl)glycinamide: step 1/2. In terms of biological role, part of the phosphoribosylformylglycinamidine synthase complex involved in the purines biosynthetic pathway. Catalyzes the ATP-dependent conversion of formylglycinamide ribonucleotide (FGAR) and glutamine to yield formylglycinamidine ribonucleotide (FGAM) and glutamate. The FGAM synthase complex is composed of three subunits. PurQ produces an ammonia molecule by converting glutamine to glutamate. PurL transfers the ammonia molecule to FGAR to form FGAM in an ATP-dependent manner. PurS interacts with PurQ and PurL and is thought to assist in the transfer of the ammonia molecule from PurQ to PurL. The chain is Phosphoribosylformylglycinamidine synthase subunit PurL from Lactococcus lactis subsp. lactis (strain IL1403) (Streptococcus lactis).